Consider the following 240-residue polypeptide: UDP-2,3-diacylglucosamine hydrolase (240 aa).

Asp-8, His-10, Asp-41, Asn-79, and His-114 together coordinate Mn(2+). Substrate is bound at residue Asn-79–Arg-80. The substrate site is built by Asp-122, Ser-160, Asn-164, Lys-167, and His-195. The Mn(2+) site is built by His-195 and His-197.

Belongs to the LpxH family. Mn(2+) is required as a cofactor.

The protein localises to the cell inner membrane. The catalysed reaction is UDP-2-N,3-O-bis[(3R)-3-hydroxytetradecanoyl]-alpha-D-glucosamine + H2O = 2-N,3-O-bis[(3R)-3-hydroxytetradecanoyl]-alpha-D-glucosaminyl 1-phosphate + UMP + 2 H(+). It participates in glycolipid biosynthesis; lipid IV(A) biosynthesis; lipid IV(A) from (3R)-3-hydroxytetradecanoyl-[acyl-carrier-protein] and UDP-N-acetyl-alpha-D-glucosamine: step 4/6. Its function is as follows. Hydrolyzes the pyrophosphate bond of UDP-2,3-diacylglucosamine to yield 2,3-diacylglucosamine 1-phosphate (lipid X) and UMP by catalyzing the attack of water at the alpha-P atom. Involved in the biosynthesis of lipid A, a phosphorylated glycolipid that anchors the lipopolysaccharide to the outer membrane of the cell. The sequence is that of UDP-2,3-diacylglucosamine hydrolase from Escherichia coli O127:H6 (strain E2348/69 / EPEC).